The sequence spans 249 residues: DNA polymerase sliding clamp 3 (249 aa).

The protein belongs to the PCNA family. In terms of assembly, homotrimer. The subunits circularize to form a toroid; DNA passes through its center. Replication factor C (RFC) is required to load the toroid on the DNA.

Sliding clamp subunit that acts as a moving platform for DNA processing. Responsible for tethering the catalytic subunit of DNA polymerase and other proteins to DNA during high-speed replication. In Aeropyrum pernix (strain ATCC 700893 / DSM 11879 / JCM 9820 / NBRC 100138 / K1), this protein is DNA polymerase sliding clamp 3.